A 220-amino-acid polypeptide reads, in one-letter code: Carbonic anhydrase 2 (220 aa).

Cysteine 42, aspartate 44, histidine 98, and cysteine 101 together coordinate Zn(2+).

The protein belongs to the beta-class carbonic anhydrase family. Homodimer. It depends on Zn(2+) as a cofactor.

It carries out the reaction hydrogencarbonate + H(+) = CO2 + H2O. This chain is Carbonic anhydrase 2 (can), found in Escherichia coli (strain K12).